We begin with the raw amino-acid sequence, 908 residues long: Putative cell signaling protein HAM1 (908 aa).

Disordered regions lie at residues 1–24 (MSVAATKSEISHNPGKMSVTSAVS) and 177–359 (TKAA…EHRQ). 5 stretches are compositionally biased toward basic and acidic residues: residues 179 to 192 (AADKSRPSQEKLDS), 231 to 247 (HPRDDPRDAQLVDDKGK), 261 to 283 (AKSDAQSKAQDLKSSARDYKETG), 306 to 321 (EQKEQVKGAAYDKRDA), and 338 to 359 (NQEKARGKAAALRDRIPEEHRQ). Positions 255-282 (YNQAQEAKSDAQSKAQDLKSSARDYKET) form a coiled coil.

In terms of processing, palmitoylated.

Its function is as follows. May act as a negative regulator of mating during vegetative growth. The sequence is that of Putative cell signaling protein HAM1 from Cryptococcus neoformans var. grubii serotype A (strain H99 / ATCC 208821 / CBS 10515 / FGSC 9487) (Filobasidiella neoformans var. grubii).